We begin with the raw amino-acid sequence, 310 residues long: tRNA-cytidine(32) 2-sulfurtransferase (310 aa).

Positions 45–50 (SGGKDS) match the PP-loop motif motif. Positions 120, 123, and 211 each coordinate [4Fe-4S] cluster.

This sequence belongs to the TtcA family. As to quaternary structure, homodimer. Mg(2+) is required as a cofactor. Requires [4Fe-4S] cluster as cofactor.

The protein resides in the cytoplasm. It carries out the reaction cytidine(32) in tRNA + S-sulfanyl-L-cysteinyl-[cysteine desulfurase] + AH2 + ATP = 2-thiocytidine(32) in tRNA + L-cysteinyl-[cysteine desulfurase] + A + AMP + diphosphate + H(+). Its pathway is tRNA modification. Its function is as follows. Catalyzes the ATP-dependent 2-thiolation of cytidine in position 32 of tRNA, to form 2-thiocytidine (s(2)C32). The sulfur atoms are provided by the cysteine/cysteine desulfurase (IscS) system. This Shewanella oneidensis (strain ATCC 700550 / JCM 31522 / CIP 106686 / LMG 19005 / NCIMB 14063 / MR-1) protein is tRNA-cytidine(32) 2-sulfurtransferase.